Consider the following 464-residue polypeptide: Methionine aminopeptidase 2 (464 aa).

Positions 1–86 (MGSKTPGNHR…RKKKKKNTKE (86 aa)) are disordered. The segment covering 43-54 (GESEGGEDEDDD) has biased composition (acidic residues). Residues 72 to 83 (KRNKRRKKKKKN) are compositionally biased toward basic residues. His-216 is a substrate binding site. Residues Asp-237, Asp-248, and His-317 each contribute to the a divalent metal cation site. Residue His-325 coordinates substrate. Residues Glu-350 and Glu-445 each coordinate a divalent metal cation.

It belongs to the peptidase M24A family. Methionine aminopeptidase eukaryotic type 2 subfamily. Co(2+) serves as cofactor. Zn(2+) is required as a cofactor. The cofactor is Mn(2+). It depends on Fe(2+) as a cofactor.

The protein resides in the cytoplasm. It carries out the reaction Release of N-terminal amino acids, preferentially methionine, from peptides and arylamides.. Cotranslationally removes the N-terminal methionine from nascent proteins. The N-terminal methionine is often cleaved when the second residue in the primary sequence is small and uncharged (Met-Ala-, Cys, Gly, Pro, Ser, Thr, or Val). In Ajellomyces capsulatus (strain NAm1 / WU24) (Darling's disease fungus), this protein is Methionine aminopeptidase 2.